We begin with the raw amino-acid sequence, 276 residues long: Aspartate dehydrogenase domain-containing protein (276 aa).

This sequence belongs to the L-aspartate dehydrogenase family.

The sequence is that of Aspartate dehydrogenase domain-containing protein (aspdh) from Danio rerio (Zebrafish).